Here is a 247-residue protein sequence, read N- to C-terminus: 14-3-3 protein zeta (247 aa).

This sequence belongs to the 14-3-3 family. Homodimer.

Its subcellular location is the cytoplasm. In terms of biological role, adapter protein implicated in the regulation of a large spectrum of both general and specialized signaling pathways. Binds to a large number of partners, usually by recognition of a phosphoserine or phosphothreonine motif. Binding generally results in the modulation of the activity of the binding partner. This Bombyx mori (Silk moth) protein is 14-3-3 protein zeta (14-3-3zeta).